The following is a 282-amino-acid chain: E3 ubiquitin-protein ligase Siah1 (282 aa).

Positions 1–28 (MSRQTATALPTGTSKCPPSQRVPTLSGT) are disordered. An RING-type zinc finger spans residues 41-76 (CPVCFDYVLPPILQCQSGHLVCSNCRPKLTCCPTCR). The segment at 90–282 (VANSVLFPCK…LGINVTISMC (193 aa)) is SBD. The segment at 93–153 (SVLFPCKYAS…VMPHLLHQHK (61 aa)) adopts an SIAH-type zinc-finger fold. C98, C105, H117, C121, C128, C135, H147, and H152 together coordinate Zn(2+).

The protein belongs to the SINA (Seven in absentia) family. In terms of assembly, homodimer.

It carries out the reaction S-ubiquitinyl-[E2 ubiquitin-conjugating enzyme]-L-cysteine + [acceptor protein]-L-lysine = [E2 ubiquitin-conjugating enzyme]-L-cysteine + N(6)-ubiquitinyl-[acceptor protein]-L-lysine.. The protein operates within protein modification; protein ubiquitination. E3 ubiquitin-protein ligase that mediates ubiquitination and subsequent proteasomal degradation of target proteins. E3 ubiquitin ligases accept ubiquitin from an E2 ubiquitin-conjugating enzyme in the form of a thioester and then directly transfers the ubiquitin to targeted substrates. It probably triggers the ubiquitin-mediated degradation of different substrates. The polypeptide is E3 ubiquitin-protein ligase Siah1 (siah1) (Danio rerio (Zebrafish)).